Consider the following 196-residue polypeptide: C-type lectin domain family 3 member A (196 aa).

Positions 1–22 (MAKNGLVLCILVVSLLLDQTDG) are cleaved as a signal peptide. Intrachain disulfides connect Cys-68–Cys-78, Cys-95–Cys-191, and Cys-167–Cys-183. A C-type lectin domain is found at 74–192 (VHKKCYLASE…CRSSKRYICE (119 aa)).

The protein localises to the secreted. Promotes cell adhesion to laminin and fibronectin. This Mus musculus (Mouse) protein is C-type lectin domain family 3 member A (Clec3a).